The following is a 481-amino-acid chain: Glutamate--tRNA ligase 1 (481 aa).

The 'HIGH' region motif lies at 11 to 21 (PSPTGSLHIGG). A 'KMSKS' region motif is present at residues 244 to 248 (KLSKR). Residue K247 coordinates ATP.

The protein belongs to the class-I aminoacyl-tRNA synthetase family. Glutamate--tRNA ligase type 1 subfamily. Monomer.

It localises to the cytoplasm. It carries out the reaction tRNA(Glu) + L-glutamate + ATP = L-glutamyl-tRNA(Glu) + AMP + diphosphate. In terms of biological role, catalyzes the attachment of glutamate to tRNA(Glu) in a two-step reaction: glutamate is first activated by ATP to form Glu-AMP and then transferred to the acceptor end of tRNA(Glu). In Caldanaerobacter subterraneus subsp. tengcongensis (strain DSM 15242 / JCM 11007 / NBRC 100824 / MB4) (Thermoanaerobacter tengcongensis), this protein is Glutamate--tRNA ligase 1.